Here is a 307-residue protein sequence, read N- to C-terminus: Ribosomal RNA small subunit methyltransferase H (307 aa).

S-adenosyl-L-methionine is bound by residues 33-35 (GGY), aspartate 51, phenylalanine 82, aspartate 96, and glutamine 103.

It belongs to the methyltransferase superfamily. RsmH family.

The protein resides in the cytoplasm. It carries out the reaction cytidine(1402) in 16S rRNA + S-adenosyl-L-methionine = N(4)-methylcytidine(1402) in 16S rRNA + S-adenosyl-L-homocysteine + H(+). In terms of biological role, specifically methylates the N4 position of cytidine in position 1402 (C1402) of 16S rRNA. The polypeptide is Ribosomal RNA small subunit methyltransferase H (Rickettsia massiliae (strain Mtu5)).